We begin with the raw amino-acid sequence, 109 residues long: Elongin-C (109 aa).

It belongs to the SKP1 family.

The protein localises to the nucleus. Its function is as follows. SIII, also known as elongin, is a general transcription elongation factor that increases the RNA polymerase II transcription elongation past template-encoded arresting sites. Subunit A is transcriptionally active and its transcription activity is strongly enhanced by binding to the dimeric complex of the SIII regulatory subunits B and C (elongin BC complex). Functionally, the elongin BC complex seems to be involved as an adapter protein in the proteasomal degradation of target proteins via different E3 ubiquitin ligase complexes. This is Elongin-C (tceb1) from Dictyostelium discoideum (Social amoeba).